We begin with the raw amino-acid sequence, 62 residues long: Small, acid-soluble spore protein H 1 (62 aa).

It belongs to the SspH family.

It localises to the spore core. This Clostridium botulinum (strain ATCC 19397 / Type A) protein is Small, acid-soluble spore protein H 1.